The primary structure comprises 256 residues: EF-hand calcium-binding domain-containing protein 4A (256 aa).

Positions 1–10 are enriched in basic residues; the sequence is MAHLGSRRRM. The interval 1–32 is disordered; it reads MAHLGSRRRMSPGLRTRIAHRKAHRTPPSPLI. EF-hand domains follow at residues 41–69 and 71–106; these read KAHE…QNEL and LTPE…LLGV. Ca(2+) contacts are provided by Asp-84, Ser-86, Asn-88, Tyr-90, and Glu-95. Positions 190-235 form a coiled coil; sequence IRDVHHEKDTLEQALKRKETDHGREVRCLYEEMEQQIKIERERLLK.

This sequence belongs to the EFCAB4 family.

The sequence is that of EF-hand calcium-binding domain-containing protein 4A (cracr2b) from Xenopus tropicalis (Western clawed frog).